The following is a 333-amino-acid chain: Biotin synthase (333 aa).

Positions 54–287 (ANHGAIHACS…TKIIKFAAGR (234 aa)) constitute a Radical SAM core domain. The [4Fe-4S] cluster site is built by C72, C76, and C79. [2Fe-2S] cluster is bound by residues C151, C212, and K282.

It belongs to the radical SAM superfamily. Biotin synthase family. As to quaternary structure, homodimer. [4Fe-4S] cluster is required as a cofactor. The cofactor is [2Fe-2S] cluster.

It catalyses the reaction (4R,5S)-dethiobiotin + (sulfur carrier)-SH + 2 reduced [2Fe-2S]-[ferredoxin] + 2 S-adenosyl-L-methionine = (sulfur carrier)-H + biotin + 2 5'-deoxyadenosine + 2 L-methionine + 2 oxidized [2Fe-2S]-[ferredoxin]. It participates in cofactor biosynthesis; biotin biosynthesis; biotin from 7,8-diaminononanoate: step 2/2. Functionally, catalyzes the conversion of dethiobiotin (DTB) to biotin by the insertion of a sulfur atom into dethiobiotin via a radical-based mechanism. In Chlorobaculum tepidum (strain ATCC 49652 / DSM 12025 / NBRC 103806 / TLS) (Chlorobium tepidum), this protein is Biotin synthase.